The primary structure comprises 306 residues: Bifunctional protein FolD 1 (306 aa).

Residues 170 to 172 (GRG), T199, and V240 each bind NADP(+). Positions 285-306 (ARRTRSSRTPVRLPDSGAPAGR) are disordered.

It belongs to the tetrahydrofolate dehydrogenase/cyclohydrolase family. As to quaternary structure, homodimer.

The enzyme catalyses (6R)-5,10-methylene-5,6,7,8-tetrahydrofolate + NADP(+) = (6R)-5,10-methenyltetrahydrofolate + NADPH. It catalyses the reaction (6R)-5,10-methenyltetrahydrofolate + H2O = (6R)-10-formyltetrahydrofolate + H(+). It functions in the pathway one-carbon metabolism; tetrahydrofolate interconversion. Its function is as follows. Catalyzes the oxidation of 5,10-methylenetetrahydrofolate to 5,10-methenyltetrahydrofolate and then the hydrolysis of 5,10-methenyltetrahydrofolate to 10-formyltetrahydrofolate. The protein is Bifunctional protein FolD 1 of Salinispora tropica (strain ATCC BAA-916 / DSM 44818 / JCM 13857 / NBRC 105044 / CNB-440).